The following is a 287-amino-acid chain: Urease accessory protein UreD (287 aa).

This sequence belongs to the UreD family. In terms of assembly, ureD, UreF and UreG form a complex that acts as a GTP-hydrolysis-dependent molecular chaperone, activating the urease apoprotein by helping to assemble the nickel containing metallocenter of UreC. The UreE protein probably delivers the nickel.

It is found in the cytoplasm. In terms of biological role, required for maturation of urease via the functional incorporation of the urease nickel metallocenter. This is Urease accessory protein UreD from Aliivibrio fischeri (strain ATCC 700601 / ES114) (Vibrio fischeri).